Consider the following 192-residue polypeptide: Transposon Tn552 DNA-invertase BinR (192 aa).

Positions 1-136 (MKIGYARVST…AGRIAARARG (136 aa)) constitute a Resolvase/invertase-type recombinase catalytic domain. The active-site O-(5'-phospho-DNA)-serine intermediate is the S9. The segment at residues 163-182 (IKTIAEQWKVSRTTIYRYLN) is a DNA-binding region (H-T-H motif).

It belongs to the site-specific recombinase resolvase family.

In terms of biological role, DNA-invertase, mediating the inversion of inv. The polypeptide is Transposon Tn552 DNA-invertase BinR (resR) (Staphylococcus aureus).